The following is a 342-amino-acid chain: Terpene cyclase resF (342 aa).

A run of 5 helical transmembrane segments spans residues 5-25 (VSVV…GVFA), 81-101 (FMAQ…TEDF), 115-135 (WGVF…GVCF), 151-171 (STWI…MLIF), and 182-202 (IWGV…ASLL). N-linked (GlcNAc...) asparagine glycosylation is present at N224. 3 helical membrane-spanning segments follow: residues 229-249 (YVVA…FHLG), 269-289 (FLQI…WHEL), and 305-325 (YLLL…AWAL).

It belongs to the membrane-bound ascI terpene cyclase family.

Its subcellular location is the membrane. It functions in the pathway antifungal biosynthesis. Functionally, cyclase; part of the gene cluster that mediates the biosynthesis of the tetrahydropyranyl antifungal agent restricticin that acts as an inhibitor of CYP51 and blocks the ergosterol biosynthesis. The highly reducing polyketide synthase resH, the short chain dehydrogenase resG, the cyclase resF, the FAD-dependent monooxygenase resA and the enoylreductase resD are required to generate the first stable intermediate desmethylrestrictinol. ResH with resD biosynthesize the first polyketide chain intermediate that is reduced by resG, followed by epoxidation by resA before 6-endo cyclization via epoxide opening by resF leads to desmethylrestrictinol. The methyltransferase resE then catalyzes the C4 O-methylation of desmethylrestrictinol to produce restrictinol, and the nonribosomal peptide synthetase resC catalyzes the C3 esterification of restrictinol with glycine that leads to restricticin. The protein is Terpene cyclase resF of Aspergillus sclerotiorum.